Here is a 451-residue protein sequence, read N- to C-terminus: KNR4/SMI1 homolog 1 (451 aa).

Polar residues predominate over residues 410–422 (ENQIAGGSDNAKN). Residues 410–451 (ENQIAGGSDNAKNQVKLGETSDTKQDDTSKIASTVSTSDEDE) form a disordered region. The span at 428 to 438 (ETSDTKQDDTS) shows a compositional bias: basic and acidic residues. Residues 439–451 (KIASTVSTSDEDE) are compositionally biased toward polar residues.

This sequence belongs to the KNR4/SMI1 family.

The chain is KNR4/SMI1 homolog 1 from Debaryomyces hansenii (strain ATCC 36239 / CBS 767 / BCRC 21394 / JCM 1990 / NBRC 0083 / IGC 2968) (Yeast).